Consider the following 638-residue polypeptide: Probable ATP-binding protein YheS (638 aa).

ABC transporter domains follow at residues 2-246 (IIFS…AQQT) and 313-531 (VMIE…STSE). ATP-binding positions include 34–41 (GKNGCGKS) and 349–356 (GKNGAGKS). The disordered stretch occupies residues 525-563 (EQNSTSENKVSEKVGDNENSVQNRKEQKRREAELRQQTA). The segment covering 547-558 (NRKEQKRREAEL) has biased composition (basic and acidic residues).

The protein belongs to the ABC transporter superfamily. ABCF family. YheS subfamily.

Functionally, genetic data indicate it may be involved in ribosome assembly or function. This Haemophilus influenzae (strain ATCC 51907 / DSM 11121 / KW20 / Rd) protein is Probable ATP-binding protein YheS.